A 666-amino-acid polypeptide reads, in one-letter code: Fructose-1,6-bisphosphatase class 3 (666 aa).

This sequence belongs to the FBPase class 3 family. Mn(2+) is required as a cofactor.

It carries out the reaction beta-D-fructose 1,6-bisphosphate + H2O = beta-D-fructose 6-phosphate + phosphate. The protein operates within carbohydrate biosynthesis; gluconeogenesis. The sequence is that of Fructose-1,6-bisphosphatase class 3 from Parabacteroides distasonis (strain ATCC 8503 / DSM 20701 / CIP 104284 / JCM 5825 / NCTC 11152).